Reading from the N-terminus, the 533-residue chain is Na(+)/H(+) antiporter NhaB (533 aa).

A run of 11 helical transmembrane segments spans residues 10 to 30, 67 to 87, 98 to 118, 131 to 165, 209 to 229, 247 to 267, 310 to 330, 355 to 375, 396 to 416, 454 to 474, and 481 to 501; these read IGNFLGNSPKWYKIAILSFLI, PGGLLAIEAVAIGMTSASQVL, LLLVFMVAGIYFMKQLLLFVF, VSLLFCLASAFLSAFLDALTVIAVIITVAVGFYSI, LLMHAGVGTALGGVCTMVGEP, IRMSPVTVPVLFAGILTCFIV, AFVGVWLIAGLALHLASVGLI, EEALPFTALLAVFFAVVAVII, LVIFYIANGLLSMVSDNVFVG, ATPNGQAAFLFLLTSALAPLI, and MVWMALPYTIVLSIVGVMAIQ.

This sequence belongs to the NhaB Na(+)/H(+) (TC 2.A.34) antiporter family.

It localises to the cell inner membrane. It carries out the reaction 2 Na(+)(in) + 3 H(+)(out) = 2 Na(+)(out) + 3 H(+)(in). In terms of biological role, na(+)/H(+) antiporter that extrudes sodium in exchange for external protons. The polypeptide is Na(+)/H(+) antiporter NhaB (Shewanella sp. (strain ANA-3)).